The sequence spans 125 residues: Glycine cleavage system H protein (125 aa).

One can recognise a Lipoyl-binding domain in the interval Ser22 to Thr104. Residue Lys63 is modified to N6-lipoyllysine.

The protein belongs to the GcvH family. As to quaternary structure, the glycine cleavage system is composed of four proteins: P, T, L and H. It depends on (R)-lipoate as a cofactor.

Functionally, the glycine cleavage system catalyzes the degradation of glycine. The H protein shuttles the methylamine group of glycine from the P protein to the T protein. Is also involved in protein lipoylation via its role as an octanoyl/lipoyl carrier protein intermediate. The chain is Glycine cleavage system H protein from Listeria innocua serovar 6a (strain ATCC BAA-680 / CLIP 11262).